The chain runs to 599 residues: UvrABC system protein C (599 aa).

The GIY-YIG domain occupies 18–96; that stretch reads QLPGVYRMLG…IKQHRPPYNI (79 aa). The 36-residue stretch at 207-242 folds into the UVR domain; the sequence is KELNQELIAKMEEAAEQLAFEKAMFYRDRLGLLREV.

The protein belongs to the UvrC family. In terms of assembly, interacts with UvrB in an incision complex.

It localises to the cytoplasm. In terms of biological role, the UvrABC repair system catalyzes the recognition and processing of DNA lesions. UvrC both incises the 5' and 3' sides of the lesion. The N-terminal half is responsible for the 3' incision and the C-terminal half is responsible for the 5' incision. The chain is UvrABC system protein C from Acinetobacter baylyi (strain ATCC 33305 / BD413 / ADP1).